A 432-amino-acid polypeptide reads, in one-letter code: MGKSVAILGAQWGDEGKGKIVDLLTDRVKYVVRYQGGHNAGHTLIINGEKTVLRLIPSGILRDNVTCLIGNGVVLSPEALMKEMGELEARGINVRDRLKISEACPLILPYHVAMDHAREAALGKNKIGTTGRGIGPAYEDKVARRGLRVSDLFDKEAFAEKLKDILDYYNFQLVHYYKVEPVDFQKTLDDVFAIADVIKGMVADVTTLLHQARKEGVNILFEGAQGTMLDIDHGTYPFVTSSNTTAGGVATGSGFGPRNLDYVLGIIKAYCTRVGSGPFTTELFDEVGAEIARKGNEFGAVTGRPRRCGWFDAVAVRRAVQINSISGFCMTKLDVLDGFEELKICTAYKMPNGEIVEYAPMAAKDWEGVEPIYETMPGWSENTFRVTKREELPQAALDYIKRIEELVGVPVDILSTGPDRVETMILRDPFAA.

Residues 13–19 and 41–43 contribute to the GTP site; these read GDEGKGK and GHT. The active-site Proton acceptor is aspartate 14. Positions 14 and 41 each coordinate Mg(2+). Residues 14–17, 39–42, threonine 130, arginine 144, glutamine 225, threonine 240, and arginine 304 each bind IMP; these read DEGK and NAGH. Residue histidine 42 is the Proton donor of the active site. 300-306 lines the substrate pocket; sequence AVTGRPR. GTP-binding positions include arginine 306, 332-334, and 415-417; these read KLD and STG.

Belongs to the adenylosuccinate synthetase family. In terms of assembly, homodimer. Mg(2+) serves as cofactor.

Its subcellular location is the cytoplasm. The catalysed reaction is IMP + L-aspartate + GTP = N(6)-(1,2-dicarboxyethyl)-AMP + GDP + phosphate + 2 H(+). It participates in purine metabolism; AMP biosynthesis via de novo pathway; AMP from IMP: step 1/2. In terms of biological role, plays an important role in the de novo pathway of purine nucleotide biosynthesis. Catalyzes the first committed step in the biosynthesis of AMP from IMP. This is Adenylosuccinate synthetase from Actinobacillus pleuropneumoniae serotype 3 (strain JL03).